Consider the following 104-residue polypeptide: Thioredoxin (104 aa).

In terms of domain architecture, Thioredoxin spans 2–104; that stretch reads AIVKVTDSNF…NLAEVLDKHL (103 aa). An intrachain disulfide couples Cys29 to Cys32.

This sequence belongs to the thioredoxin family.

Component of the thioredoxin-thioredoxin reductase system. Participates in various redox reactions through the reversible oxidation of its active center dithiol to a disulfide and catalyzes dithiol-disulfide exchange reactions. In Staphylococcus haemolyticus (strain JCSC1435), this protein is Thioredoxin (trxA).